Reading from the N-terminus, the 416-residue chain is Phosphoglycerate kinase (416 aa).

Substrate-binding positions include 28-30 (DMN), R44, 65-68 (HQSR), R122, and R162. Residues E337 and 362–365 (GGHI) contribute to the ATP site.

Belongs to the phosphoglycerate kinase family. In terms of assembly, monomer.

The protein resides in the cytoplasm. It carries out the reaction (2R)-3-phosphoglycerate + ATP = (2R)-3-phospho-glyceroyl phosphate + ADP. Its pathway is carbohydrate degradation; glycolysis; pyruvate from D-glyceraldehyde 3-phosphate: step 2/5. The protein is Phosphoglycerate kinase of Methanosarcina mazei (strain ATCC BAA-159 / DSM 3647 / Goe1 / Go1 / JCM 11833 / OCM 88) (Methanosarcina frisia).